We begin with the raw amino-acid sequence, 183 residues long: Inner membrane-spanning protein YciB (183 aa).

5 consecutive transmembrane segments (helical) span residues Ile-22–Leu-42, Met-50–Asp-70, Ala-72–Ser-92, Val-118–Phe-138, and Phe-148–Leu-168.

Belongs to the YciB family.

It is found in the cell inner membrane. Functionally, plays a role in cell envelope biogenesis, maintenance of cell envelope integrity and membrane homeostasis. The protein is Inner membrane-spanning protein YciB of Shewanella frigidimarina (strain NCIMB 400).